The following is a 773-amino-acid chain: ATP-dependent RNA helicase MAK5 (773 aa).

Over residues 73–82 the composition is skewed to basic and acidic residues; that stretch reads KDSNKEKVGD. Disordered stretches follow at residues 73-99 and 114-144; these read KDSN…ESEL and SAAS…VDED. Residues 83 to 99 show a composition bias toward acidic residues; sequence DQESVENESGSDSESEL. At Thr135 the chain carries Phosphothreonine. Residue Ser138 is modified to Phosphoserine. The Q motif motif lies at 171 to 199; sequence EWTNLAPLSMTILQSLQNLNFLRPTEIQK. The Helicase ATP-binding domain occupies 202–399; the sequence is IPVIMQGVDV…SSSRQVKDRR (198 aa). Residue 215 to 222 participates in ATP binding; sequence ASTGSGKT. The short motif at 333–336 is the DEAD box element; that stretch reads DEAD. One can recognise a Helicase C-terminal domain in the interval 452-615; that stretch reads DLYCYYFLTM…STDLNSRSTN (164 aa). Ser678 carries the post-translational modification Phosphoserine.

The protein belongs to the DEAD box helicase family. DDX24/MAK5 subfamily.

It is found in the nucleus. The protein localises to the nucleolus. It carries out the reaction ATP + H2O = ADP + phosphate + H(+). Its function is as follows. ATP-binding RNA helicase involved in the biogenesis of 60S ribosomal subunits and is required for the normal formation of 25S and 5.8S rRNAs. Required for the maintenance of dsRNA killer plasmid. The polypeptide is ATP-dependent RNA helicase MAK5 (MAK5) (Saccharomyces cerevisiae (strain ATCC 204508 / S288c) (Baker's yeast)).